Consider the following 488-residue polypeptide: Inosine-5'-monophosphate dehydrogenase (488 aa).

2 CBS domains span residues 95 to 153 and 157 to 216; these read VISN…SIKI and MTQE…AKDE. Residues aspartate 250 and 300-302 contribute to the NAD(+) site; that span reads GIG. K(+) contacts are provided by glycine 302 and glycine 304. Serine 305 contributes to the IMP binding site. Cysteine 307 serves as a coordination point for K(+). Cysteine 307 acts as the Thioimidate intermediate in catalysis. IMP is bound by residues 340-342, 363-364, and 387-391; these read DGG, GS, and YRGMG. Catalysis depends on arginine 403, which acts as the Proton acceptor. Glutamate 417 contributes to the IMP binding site. A disordered region spans residues 468–488; that stretch reads GLAESHPHNIQITKESPNYSF. Residues glutamate 471, serine 472, and histidine 473 each coordinate K(+). Over residues 475–488 the composition is skewed to polar residues; the sequence is HNIQITKESPNYSF.

It belongs to the IMPDH/GMPR family. In terms of assembly, homotetramer. The cofactor is K(+).

It catalyses the reaction IMP + NAD(+) + H2O = XMP + NADH + H(+). The protein operates within purine metabolism; XMP biosynthesis via de novo pathway; XMP from IMP: step 1/1. Its activity is regulated as follows. Mycophenolic acid (MPA) is a non-competitive inhibitor that prevents formation of the closed enzyme conformation by binding to the same site as the amobile flap. In contrast, mizoribine monophosphate (MZP) is a competitive inhibitor that induces the closed conformation. MPA is a potent inhibitor of mammalian IMPDHs but a poor inhibitor of the bacterial enzymes. MZP is a more potent inhibitor of bacterial IMPDH. Functionally, catalyzes the conversion of inosine 5'-phosphate (IMP) to xanthosine 5'-phosphate (XMP), the first committed and rate-limiting step in the de novo synthesis of guanine nucleotides, and therefore plays an important role in the regulation of cell growth. The polypeptide is Inosine-5'-monophosphate dehydrogenase (Staphylococcus aureus (strain MW2)).